A 692-amino-acid polypeptide reads, in one-letter code: DNA-binding protein RFX2 (692 aa).

The segment at 1-26 (MQNSEGGADSPATVALRPAAQPVPAS) is disordered. Ser26 carries the phosphoserine modification. Positions 169 to 244 (TLQWLLDNYE…YHYYGIRLKP (76 aa)) form a DNA-binding region, RFX-type winged-helix. Residues 261 to 296 (RQQPTHQKPRYRPAQKSDSLGDGSAHSNMHSTPEQA) are disordered. Positions 285–294 (AHSNMHSTPE) are enriched in polar residues. Ser386 bears the Phosphoserine mark. Residues 660-685 (DGHSSEADVDGRSLGEPLVKRERSDP) are compositionally biased toward basic and acidic residues. Residues 660–692 (DGHSSEADVDGRSLGEPLVKRERSDPSHPLQGI) are disordered.

Belongs to the RFX family. In terms of assembly, homodimer; probably only forms homodimers in testis. Heterodimer; heterodimerizes with RFX1 and RFX3. Expressed at highest level in testis. Expressed at lower level in thymus. Also expressed in stomach, kidney, liver, brain and heart. Weakly expressed in spleen and lung. Within testis, most abundantly present in spermatocytes: present from pachytene spermatocytes to early spermatids (at protein level). Also present in non-germinal tissues.

It localises to the nucleus. The protein resides in the cytoplasm. Its function is as follows. Transcription factor that acts as a key regulator of spermatogenesis. Acts by regulating expression of genes required for the haploid phase during spermiogenesis, such as genes required for cilium assembly and function. Recognizes and binds the X-box, a regulatory motif with DNA sequence 5'-GTNRCC(0-3N)RGYAAC-3' present on promoters. Probably activates transcription of the testis-specific histone gene H1-6. This is DNA-binding protein RFX2 (Rfx2) from Rattus norvegicus (Rat).